The following is a 1445-amino-acid chain: Protein HUA2-LIKE 1 (1445 aa).

The region spanning 20-77 (LGDLVLAKVKGFPAWPAKIGQPEDWNQAPDPKKHFVQFYGTGEIGFVTPPDIQPFTSE) is the PWWP domain. 7 disordered regions span residues 133–197 (KYLN…SPDP), 211–302 (TCTD…DLNI), 319–356 (FENE…SKRL), 409–439 (EHTS…SDSD), 460–491 (DDDD…ANAS), 641–685 (GIPK…TSTP), and 797–835 (LTPS…SLSG). Polar residues-rich tracts occupy residues 173–187 (QDSS…SPSS) and 211–225 (TCTD…NLVN). 3 stretches are compositionally biased toward basic and acidic residues: residues 228 to 257 (RIIR…RAAT), 274 to 293 (GQDH…ESSD), and 331 to 350 (DESK…DQKQ). 2 stretches are compositionally biased toward polar residues: residues 660-673 (RVSS…NQRS) and 797-814 (LTPS…QAGT). A CID domain is found at 838–979 (EAAISRDTFE…RYIGDLGASG (142 aa)). The segment at 1110–1203 (PATTCATELP…SLPLQPGFAP (94 aa)) is disordered. Residues 1124–1170 (GSPPLPHESPPSPPPQPPSSPPPPSSPPQLAPAPPPSDHCLPPPTAP) are compositionally biased toward pro residues.

In terms of tissue distribution, expressed throughout young primordia, and vegetative and reproductive apices.

The protein resides in the nucleus. Probable transcription factor that acts with partial redundancy with HULK2 and HULK3. Plays diverse and essential roles in the control of plant development, physiology and flowering time. This Arabidopsis thaliana (Mouse-ear cress) protein is Protein HUA2-LIKE 1.